The chain runs to 514 residues: MQQLNPSEISEIIKGRIDKLDVTSQARNEGTVVSVSDGIVRIHGLADVMYGEMIEFPGGVYGMALNLEQDSVGAVVLGAYTTLAEGMSAKCTGRILEVPVGKELLGRVVDALGNPVDGKGPLNNTETDAVEKVAPGVIWRKSVDQPVQTGYKAVDAMIPVGRGQRELIIGDRQIGKTALAIDAIINQKNSGIFCVYVAIGQKQSTIANVVRKLEENGALANTIVVAASASESAALQFLAPYSGCTMGEFFRDRGEDALIVYDDLSKQAVAYRQISLLLRRPPGREAYPGDVFYLHSRLLERASRVSEEYVEKFTNGAVTGKTGSLTALPIIETQAGDVSAFVPTNVISITDGQIFLESAMFNSGIRPAVNAGVSVSRVGGAAQTKIIKKLSGGIRTALAQYRELAAFAQFASDLDEATRKQLEHGQRVTELMKQKQYAPMSIADMALSLYAAERGFLTDVEIAKIGSFEQALIAYFNRDHADLMAKINVKGDFNDEIDSGMKAGIEKFKATQTW.

170–177 (GDRQIGKT) contributes to the ATP binding site.

Belongs to the ATPase alpha/beta chains family. As to quaternary structure, F-type ATPases have 2 components, CF(1) - the catalytic core - and CF(0) - the membrane proton channel. CF(1) has five subunits: alpha(3), beta(3), gamma(1), delta(1), epsilon(1). CF(0) has three main subunits: a(1), b(2) and c(9-12). The alpha and beta chains form an alternating ring which encloses part of the gamma chain. CF(1) is attached to CF(0) by a central stalk formed by the gamma and epsilon chains, while a peripheral stalk is formed by the delta and b chains.

It is found in the cell inner membrane. The enzyme catalyses ATP + H2O + 4 H(+)(in) = ADP + phosphate + 5 H(+)(out). Its function is as follows. Produces ATP from ADP in the presence of a proton gradient across the membrane. The alpha chain is a regulatory subunit. The sequence is that of ATP synthase subunit alpha from Pseudomonas savastanoi pv. phaseolicola (strain 1448A / Race 6) (Pseudomonas syringae pv. phaseolicola (strain 1448A / Race 6)).